The primary structure comprises 506 residues: MKEYRVYLERARSRQQDFLYPLIFREYIYGLAYSHNFNRSIFMENGGYDNKYSLLNVKRLITRMYQQNHLIISANDSNKNPFLGYNKNFYSQIISEGFAIIVEIPFFLQLSSSLEEAEIIKSYKNVRSIHSIFPFLEDKFTYLNYVSDIRIPYPIHLEILIQILRYWVKDVPFFHLLRLFLSHFCNWNCFIPTKKSISTFSKRNPRLFLFLHNFYVCEYESIFLFLRNKSSHLRLKSFSVFFERIFFYAKRKHLVEVFSKDFSYTLPFFKDPNIHYVRYQGKCILASKNVPFLMNKWKYYFIHLWQCFFDVWSQPRTININQLSEHSFQLLGYFSNVRLNRSVVRSQMLQNTFLIEIVSKKLDIIVPIIPLIRSLAKAKFCNVLGHPISKPVWADSSDFDIIERFLRICRNLSHYYNGSSKKKSLYRIKYILRLSCIKTLACKHKSTVRAFLKRSGSEELLEEFFTEEEEILSLIFPRDSFSLRRFHRNRIWYLDILFSNDLVNDE.

This sequence belongs to the intron maturase 2 family. MatK subfamily.

The protein resides in the plastid. It localises to the chloroplast. In terms of biological role, usually encoded in the trnK tRNA gene intron. Probably assists in splicing its own and other chloroplast group II introns. This Trifolium repens (Creeping white clover) protein is Maturase K.